A 113-amino-acid chain; its full sequence is Large ribosomal subunit protein uL22 (113 aa).

Belongs to the universal ribosomal protein uL22 family. As to quaternary structure, part of the 50S ribosomal subunit.

Functionally, this protein binds specifically to 23S rRNA; its binding is stimulated by other ribosomal proteins, e.g. L4, L17, and L20. It is important during the early stages of 50S assembly. It makes multiple contacts with different domains of the 23S rRNA in the assembled 50S subunit and ribosome. The globular domain of the protein is located near the polypeptide exit tunnel on the outside of the subunit, while an extended beta-hairpin is found that lines the wall of the exit tunnel in the center of the 70S ribosome. In Magnetococcus marinus (strain ATCC BAA-1437 / JCM 17883 / MC-1), this protein is Large ribosomal subunit protein uL22.